Consider the following 109-residue polypeptide: Large ribosomal subunit protein uL24 (109 aa).

This sequence belongs to the universal ribosomal protein uL24 family. In terms of assembly, part of the 50S ribosomal subunit.

One of two assembly initiator proteins, it binds directly to the 5'-end of the 23S rRNA, where it nucleates assembly of the 50S subunit. Its function is as follows. One of the proteins that surrounds the polypeptide exit tunnel on the outside of the subunit. The protein is Large ribosomal subunit protein uL24 of Rickettsia massiliae (strain Mtu5).